The sequence spans 604 residues: Threonine--tRNA ligase (604 aa).

The segment at 210 to 501 (DHRKIGTEME…LTEHYAGEFP (292 aa)) is catalytic. Zn(2+) contacts are provided by Cys-302, His-353, and His-478.

This sequence belongs to the class-II aminoacyl-tRNA synthetase family. Homodimer. Zn(2+) serves as cofactor.

The protein localises to the cytoplasm. It catalyses the reaction tRNA(Thr) + L-threonine + ATP = L-threonyl-tRNA(Thr) + AMP + diphosphate + H(+). In terms of biological role, catalyzes the attachment of threonine to tRNA(Thr) in a two-step reaction: L-threonine is first activated by ATP to form Thr-AMP and then transferred to the acceptor end of tRNA(Thr). Also edits incorrectly charged L-seryl-tRNA(Thr). The chain is Threonine--tRNA ligase from Sulfurovum sp. (strain NBC37-1).